A 62-amino-acid chain; its full sequence is High-potential iron-sulfur protein (62 aa).

4 residues coordinate [4Fe-4S] cluster: cysteine 22, cysteine 25, cysteine 40, and cysteine 55.

This sequence belongs to the high-potential iron-sulfur protein (HiPIP) family. As to quaternary structure, homodimer.

Specific class of high-redox-potential 4Fe-4S ferredoxins. Functions in anaerobic electron transport in most purple and in some other photosynthetic bacteria and in at least one genus (Paracoccus) of halophilic, denitrifying bacteria. This chain is High-potential iron-sulfur protein (hip), found in Rhodocyclus tenuis (Rhodospirillum tenue).